We begin with the raw amino-acid sequence, 285 residues long: Hydrolase in pqqF 5'region (285 aa).

Positions 22-258 (MRVALYQCPP…EALIIGTLDR (237 aa)) constitute a CN hydrolase domain. The Proton acceptor role is filled by Glu60. Residue Lys131 is the Proton donor of the active site. Residue Cys165 is the Nucleophile of the active site.

It belongs to the carbon-nitrogen hydrolase superfamily. NIT1/NIT2 family.

In Pseudomonas protegens (strain DSM 19095 / LMG 27888 / CFBP 6595 / CHA0), this protein is Hydrolase in pqqF 5'region.